The sequence spans 395 residues: RNA pseudouridine synthase 7 (395 aa).

Positions 1–21 are disordered; sequence MKRKQQEDDNDDGVEKAVSPV. Residues 74–136 enclose the S4 RNA-binding domain; the sequence is KTIVDLFADE…HEPPVMIDDV (63 aa). The active site involves Asp-187. A compositionally biased stretch (polar residues) spans 244–255; that stretch reads EGRSTAEDANSS. The segment at 244–263 is disordered; sequence EGRSTAEDANSSGDDKKVKG.

This sequence belongs to the pseudouridine synthase RluA family.

It carries out the reaction a uridine in RNA = a pseudouridine in RNA. This Arabidopsis thaliana (Mouse-ear cress) protein is RNA pseudouridine synthase 7.